The sequence spans 417 residues: Imidazolonepropionase (417 aa).

Residues H80 and H82 each coordinate Fe(3+). Zn(2+) is bound by residues H80 and H82. Residues R89, Y152, and H187 each coordinate 4-imidazolone-5-propanoate. Y152 contacts N-formimidoyl-L-glutamate. H252 is a binding site for Fe(3+). Residue H252 coordinates Zn(2+). E255 is a 4-imidazolone-5-propanoate binding site. Fe(3+) is bound at residue D326. Position 326 (D326) interacts with Zn(2+). N-formimidoyl-L-glutamate contacts are provided by N328 and G330. 4-imidazolone-5-propanoate is bound at residue S331.

Belongs to the metallo-dependent hydrolases superfamily. HutI family. The cofactor is Zn(2+). Fe(3+) serves as cofactor.

The protein localises to the cytoplasm. It catalyses the reaction 4-imidazolone-5-propanoate + H2O = N-formimidoyl-L-glutamate. It functions in the pathway amino-acid degradation; L-histidine degradation into L-glutamate; N-formimidoyl-L-glutamate from L-histidine: step 3/3. Catalyzes the hydrolytic cleavage of the carbon-nitrogen bond in imidazolone-5-propanoate to yield N-formimidoyl-L-glutamate. It is the third step in the universal histidine degradation pathway. This Bacteroides fragilis (strain ATCC 25285 / DSM 2151 / CCUG 4856 / JCM 11019 / LMG 10263 / NCTC 9343 / Onslow / VPI 2553 / EN-2) protein is Imidazolonepropionase.